A 166-amino-acid polypeptide reads, in one-letter code: Large ribosomal subunit protein uL10 (166 aa).

The protein belongs to the universal ribosomal protein uL10 family. As to quaternary structure, part of the ribosomal stalk of the 50S ribosomal subunit. The N-terminus interacts with L11 and the large rRNA to form the base of the stalk. The C-terminus forms an elongated spine to which L12 dimers bind in a sequential fashion forming a multimeric L10(L12)X complex.

Functionally, forms part of the ribosomal stalk, playing a central role in the interaction of the ribosome with GTP-bound translation factors. The sequence is that of Large ribosomal subunit protein uL10 from Bacillus pumilus (strain SAFR-032).